Reading from the N-terminus, the 432-residue chain is Transcriptional adapter 3 (432 aa).

A Glycyl lysine isopeptide (Lys-Gly) (interchain with G-Cter in SUMO2) cross-link involves residue Lys21. A coiled-coil region spans residues 40 to 69 (IEELDTLQLELETLLSSASRRLRVLEAETQ). Residues 87–127 (GRDHELGAPPKHGKPKKQKLEGKAGHGPGPGPGRPKSKNLQ) are disordered. Lys129 participates in a covalent cross-link: Glycyl lysine isopeptide (Lys-Gly) (interchain with G-Cter in SUMO2). 2 stretches are compositionally biased toward basic and acidic residues: residues 211 to 223 (DGAR…DKKK) and 232 to 251 (LDTK…HEQP). 2 disordered regions span residues 211-257 (DGAR…GCPF) and 271-319 (ENII…SRIK). Residues Ser280 and Ser298 each carry the phosphoserine modification. Over residues 295–305 (ASTSPRNQNKP) the composition is skewed to polar residues. A coiled-coil region spans residues 367–407 (LLRLAKEEVSRQELRQRVRMADNEVMDAFRKIMAARQKKRT). Position 418 is an N6-acetyllysine (Lys418).

The protein belongs to the NGG1 family. As to quaternary structure, the PCAF complex is composed of a number of TBP-associated factors (TAFS), such as TAF5, TAF5L, TAF6, TAF6L, TAF9, TAF10 and TAF12, PCAF, and also PCAF-associated factors (PAFs), such as TADA2L/ADA2, TADA3L/ADA3 and SPT3. Interacts directly with TADA2L and PCAF and also with the high-risk HPV oncoprotein E6. Component of the STAGA transcription coactivator-HAT complex, at least composed of SUPT3H, GCN5L2, TAF5L, TAF6L, SUPT7L, TADA3L, TAD1L, TAF10, TAF12, TRRAP and TAF9. Component of the TFTC-HAT complex. Component of the ADA2A-containing complex (ATAC), composed of KAT14, KAT2A, TADA2L, TADA3L, ZZ3, MBIP, WDR5, YEATS2, CCDC101 and DR1.

It is found in the nucleus. Its function is as follows. Functions as a component of the PCAF complex. The PCAF complex is capable of efficiently acetylating histones in a nucleosomal context. The PCAF complex could be considered as the human version of the yeast SAGA complex. Also known as a coactivator for p53/TP53-dependent transcriptional activation. Component of the ATAC complex, a complex with histone acetyltransferase activity on histones H3 and H4. The sequence is that of Transcriptional adapter 3 (TADA3) from Pongo abelii (Sumatran orangutan).